The following is a 110-amino-acid chain: Large ribosomal subunit protein uL22 (110 aa).

This sequence belongs to the universal ribosomal protein uL22 family. As to quaternary structure, part of the 50S ribosomal subunit.

Its function is as follows. This protein binds specifically to 23S rRNA; its binding is stimulated by other ribosomal proteins, e.g. L4, L17, and L20. It is important during the early stages of 50S assembly. It makes multiple contacts with different domains of the 23S rRNA in the assembled 50S subunit and ribosome. In terms of biological role, the globular domain of the protein is located near the polypeptide exit tunnel on the outside of the subunit, while an extended beta-hairpin is found that lines the wall of the exit tunnel in the center of the 70S ribosome. This chain is Large ribosomal subunit protein uL22, found in Maridesulfovibrio salexigens (strain ATCC 14822 / DSM 2638 / NCIMB 8403 / VKM B-1763) (Desulfovibrio salexigens).